Reading from the N-terminus, the 464-residue chain is ATP synthase subunit beta (464 aa).

153-160 (GGAGVGKT) provides a ligand contact to ATP.

Belongs to the ATPase alpha/beta chains family. In terms of assembly, F-type ATPases have 2 components, CF(1) - the catalytic core - and CF(0) - the membrane proton channel. CF(1) has five subunits: alpha(3), beta(3), gamma(1), delta(1), epsilon(1). CF(0) has three main subunits: a(1), b(2) and c(9-12). The alpha and beta chains form an alternating ring which encloses part of the gamma chain. CF(1) is attached to CF(0) by a central stalk formed by the gamma and epsilon chains, while a peripheral stalk is formed by the delta and b chains.

The protein localises to the cell inner membrane. The enzyme catalyses ATP + H2O + 4 H(+)(in) = ADP + phosphate + 5 H(+)(out). In terms of biological role, produces ATP from ADP in the presence of a proton gradient across the membrane. The catalytic sites are hosted primarily by the beta subunits. This chain is ATP synthase subunit beta, found in Burkholderia ambifaria (strain MC40-6).